A 672-amino-acid chain; its full sequence is DNA ligase (672 aa).

NAD(+)-binding positions include 32–36 (DSEYD), 81–82 (SL), and Glu-114. The N6-AMP-lysine intermediate role is filled by Lys-116. NAD(+) is bound by residues Arg-137, Glu-174, Lys-291, and Lys-315. Residues Cys-409, Cys-412, Cys-427, and Cys-433 each coordinate Zn(2+). Positions 592-672 (VNENPFKEKT…EFLEIVNSFS (81 aa)) constitute a BRCT domain.

It belongs to the NAD-dependent DNA ligase family. LigA subfamily. It depends on Mg(2+) as a cofactor. Mn(2+) is required as a cofactor.

It carries out the reaction NAD(+) + (deoxyribonucleotide)n-3'-hydroxyl + 5'-phospho-(deoxyribonucleotide)m = (deoxyribonucleotide)n+m + AMP + beta-nicotinamide D-nucleotide.. DNA ligase that catalyzes the formation of phosphodiester linkages between 5'-phosphoryl and 3'-hydroxyl groups in double-stranded DNA using NAD as a coenzyme and as the energy source for the reaction. It is essential for DNA replication and repair of damaged DNA. This Actinobacillus succinogenes (strain ATCC 55618 / DSM 22257 / CCUG 43843 / 130Z) protein is DNA ligase.